Consider the following 552-residue polypeptide: Probable protein kinase UbiB (552 aa).

Positions 121–504 (HFDTVPLASA…QGLQRRVVNA (384 aa)) constitute a Protein kinase domain. Residues 127 to 135 (LASASISQV) and K149 each bind ATP. The active-site Proton acceptor is D284. 2 consecutive transmembrane segments (helical) span residues 501–521 (VVNAIVGSGLLVAAAVLYGLH) and 530–550 (IPVWSLISGCVGALALFSAWW).

This sequence belongs to the ABC1 family. UbiB subfamily.

It localises to the cell inner membrane. It participates in cofactor biosynthesis; ubiquinone biosynthesis [regulation]. In terms of biological role, is probably a protein kinase regulator of UbiI activity which is involved in aerobic coenzyme Q (ubiquinone) biosynthesis. This chain is Probable protein kinase UbiB, found in Xylella fastidiosa (strain M12).